The following is a 538-amino-acid chain: Spindle pole body protein CSA6 (538 aa).

Disordered regions lie at residues 1 to 31 (MEDSTEDIIKSFTLEQSPEIKPKPKSKTSDL) and 57 to 129 (QNIS…KYQD). 2 stretches are compositionally biased toward basic and acidic residues: residues 18-30 (PEIKPKPKSKTSD) and 57-68 (QNISDSEHDLTP). 2 stretches are compositionally biased toward polar residues: residues 86 to 96 (KFSSSIPQKPT) and 104 to 122 (TSPTKNYTDHINQLRSGPN). A coiled-coil region spans residues 144-237 (KQEQNLKLEN…RNERDELVKD (94 aa)). The span at 304–323 (KKISEPSAAVEKDTTSEDKT) shows a compositional bias: basic and acidic residues. Disordered stretches follow at residues 304-338 (KKISEPSAAVEKDTTSEDKTPPIPNTANSSDTPRM) and 355-458 (SSNN…STKY). Composition is skewed to polar residues over residues 355 to 392 (SSNNKNTLSPKQAINSQTYSQPNNFSNNTVPPSQSAAY) and 407 to 425 (TNFYSSSTPNTNGYNQSSQ). Residues 426 to 444 (SDERPETFELPHVAKDHWL) show a composition bias toward basic and acidic residues. Positions 446-457 (RPTSERSTQSTK) are enriched in polar residues.

The protein resides in the cytoplasm. It localises to the cytoskeleton. Its subcellular location is the microtubule organizing center. The protein localises to the spindle pole body. Its function is as follows. Plays a role in mitotic spindle pole body organization, possibly at the point of spindle pole body separation. Required for mitotic exit. In Candida albicans (strain SC5314 / ATCC MYA-2876) (Yeast), this protein is Spindle pole body protein CSA6.